Here is a 470-residue protein sequence, read N- to C-terminus: Neuraminidase (470 aa).

Residues 1–6 are Intravirion-facing; that stretch reads MNPNQK. A helical membrane pass occupies residues 7–27; the sequence is IITIGSICMAIGIISLILQIG. The involved in apical transport and lipid raft association stretch occupies residues 11–33; the sequence is GSICMAIGIISLILQIGNIISIW. At 28–470 the chain is on the virion surface side; sequence NIISIWVSHS…GAELPFTIDK (443 aa). Residues 36–90 are hypervariable stalk region; that stretch reads HSIQTGSQNHTGICNQRIITYENSTWVNQTYVNISNTNVVAGKDTTSMTLAGNSS. Asn44, Asn58, Asn63, Asn68, and Asn88 each carry an N-linked (GlcNAc...) asparagine; by host glycan. The interval 91–470 is head of neuraminidase; sequence LCPIRGWAIY…GAELPFTIDK (380 aa). Disulfide bonds link Cys92-Cys417, Cys124-Cys129, Cys184-Cys231, Cys233-Cys238, Cys279-Cys292, Cys281-Cys290, Cys318-Cys335, and Cys421-Cys447. Arg118 serves as a coordination point for substrate. Asn146 carries N-linked (GlcNAc...) asparagine; by host glycosylation. Asp151 (proton donor/acceptor) is an active-site residue. Residue Arg152 coordinates substrate. Asn235 is a glycosylation site (N-linked (GlcNAc...) asparagine; by host). Residue 277 to 278 participates in substrate binding; the sequence is EE. N-linked (GlcNAc...) asparagine; by host glycosylation occurs at Asn285. Arg293 contacts substrate. Ca(2+)-binding residues include Asp294, Gly298, and Asp324. Asn365 is a glycosylation site (N-linked (GlcNAc...) asparagine; by host). Substrate is bound at residue Arg368. Tyr402 (nucleophile) is an active-site residue. Asn455 carries N-linked (GlcNAc...) asparagine; by host glycosylation.

Belongs to the glycosyl hydrolase 34 family. Homotetramer. Ca(2+) serves as cofactor. N-glycosylated.

The protein localises to the virion membrane. It localises to the host apical cell membrane. It catalyses the reaction Hydrolysis of alpha-(2-&gt;3)-, alpha-(2-&gt;6)-, alpha-(2-&gt;8)- glycosidic linkages of terminal sialic acid residues in oligosaccharides, glycoproteins, glycolipids, colominic acid and synthetic substrates.. With respect to regulation, inhibited by the neuraminidase inhibitors zanamivir (Relenza) and oseltamivir (Tamiflu). These drugs interfere with the release of progeny virus from infected cells and are effective against all influenza strains. Resistance to neuraminidase inhibitors is quite rare. Functionally, catalyzes the removal of terminal sialic acid residues from viral and cellular glycoconjugates. Cleaves off the terminal sialic acids on the glycosylated HA during virus budding to facilitate virus release. Additionally helps virus spread through the circulation by further removing sialic acids from the cell surface. These cleavages prevent self-aggregation and ensure the efficient spread of the progeny virus from cell to cell. Otherwise, infection would be limited to one round of replication. Described as a receptor-destroying enzyme because it cleaves a terminal sialic acid from the cellular receptors. May facilitate viral invasion of the upper airways by cleaving the sialic acid moieties on the mucin of the airway epithelial cells. Likely to plays a role in the budding process through its association with lipid rafts during intracellular transport. May additionally display a raft-association independent effect on budding. Plays a role in the determination of host range restriction on replication and virulence. Sialidase activity in late endosome/lysosome traffic seems to enhance virus replication. The polypeptide is Neuraminidase (Influenza A virus (strain A/Kiev/59/1979 H1N1)).